We begin with the raw amino-acid sequence, 406 residues long: Tyrosine--tRNA ligase (406 aa).

Residue tyrosine 39 coordinates L-tyrosine. A 'HIGH' region motif is present at residues 44-53 (PTADSLHVGH). L-tyrosine-binding residues include tyrosine 172 and glutamine 176. Residues 232–236 (KMGKT) carry the 'KMSKS' region motif. Lysine 235 contributes to the ATP binding site. In terms of domain architecture, S4 RNA-binding spans 344 to 404 (KELLDVLVDR…LGKKKFYNIV (61 aa)).

This sequence belongs to the class-I aminoacyl-tRNA synthetase family. TyrS type 1 subfamily. In terms of assembly, homodimer.

Its subcellular location is the cytoplasm. The enzyme catalyses tRNA(Tyr) + L-tyrosine + ATP = L-tyrosyl-tRNA(Tyr) + AMP + diphosphate + H(+). Functionally, catalyzes the attachment of tyrosine to tRNA(Tyr) in a two-step reaction: tyrosine is first activated by ATP to form Tyr-AMP and then transferred to the acceptor end of tRNA(Tyr). The sequence is that of Tyrosine--tRNA ligase from Fusobacterium nucleatum subsp. nucleatum (strain ATCC 25586 / DSM 15643 / BCRC 10681 / CIP 101130 / JCM 8532 / KCTC 2640 / LMG 13131 / VPI 4355).